The sequence spans 431 residues: Lipid storage droplets surface-binding protein 1 (431 aa).

The tract at residues 397-431 (KVTGSDGGNSNHRSSRRRQDPNHYSATHNNINGVY) is disordered. Residues 418 to 431 (NHYSATHNNINGVY) show a composition bias toward polar residues.

Belongs to the perilipin family.

It localises to the cytoplasm. It is found in the lipid droplet. In terms of biological role, required for normal deposition of neutral lipids in the oocyte. The polypeptide is Lipid storage droplets surface-binding protein 1 (Drosophila melanogaster (Fruit fly)).